The chain runs to 373 residues: MRLSDFDFHLPDAAIALRPAEPRDSARLLVVRPGEGLEDRIVRDLPDFLRPGDALVFNDTRVIPARLMGRRAGRETGGGDGSPVAVEATLHRRIAPDRWVAFMRPGKRLKEGDRIAFGHDQDRACQAGMLDATVIAKHEGGEIELAFDFAGVDLDLAVAAHGEMPLPPYIAAKRAEDDRDRADYQTVYAREDGSVAAPTAGLHFTSDLLERLKAGGVSLHFVTLHVGAGTFLPVKTDVVADHKMHAEFGEVPAAVADALNAARAAGGRIVCVGTTSLRLLESATGEDRIIKPFADETAIFITPGYRFRAADVLMTNFHLPKSTLFMLVSAFAGQATMKAAYEHAIAAGYRFYSYGDGSLLFRAATDENGSEQS.

It belongs to the QueA family. In terms of assembly, monomer.

The protein resides in the cytoplasm. The enzyme catalyses 7-aminomethyl-7-carbaguanosine(34) in tRNA + S-adenosyl-L-methionine = epoxyqueuosine(34) in tRNA + adenine + L-methionine + 2 H(+). It participates in tRNA modification; tRNA-queuosine biosynthesis. Functionally, transfers and isomerizes the ribose moiety from AdoMet to the 7-aminomethyl group of 7-deazaguanine (preQ1-tRNA) to give epoxyqueuosine (oQ-tRNA). The polypeptide is S-adenosylmethionine:tRNA ribosyltransferase-isomerase (Caulobacter sp. (strain K31)).